A 491-amino-acid chain; its full sequence is NADH-quinone oxidoreductase subunit N 1 (491 aa).

Helical transmembrane passes span 15–35, 41–61, 77–97, 105–125, 130–150, 165–185, 211–231, 247–269, 279–299, 307–327, 333–353, 378–398, 416–436, and 459–479; these read VLGM…VDMF, VLLT…ALDY, FGVL…LIAF, LSQG…LFLV, LVTI…LTGF, LLLG…IYGM, PILL…VSMF, PVTA…RFLN, WQLL…IVAV, MLAY…LAAS, AFTV…AVLI, LALA…TAGF, LAII…RVIV, and LGVI…NIFT.

It belongs to the complex I subunit 2 family. As to quaternary structure, NDH-1 is composed of 14 different subunits. Subunits NuoA, H, J, K, L, M, N constitute the membrane sector of the complex.

The protein localises to the cell membrane. The enzyme catalyses a quinone + NADH + 5 H(+)(in) = a quinol + NAD(+) + 4 H(+)(out). Its function is as follows. NDH-1 shuttles electrons from NADH, via FMN and iron-sulfur (Fe-S) centers, to quinones in the respiratory chain. The immediate electron acceptor for the enzyme in this species is believed to be ubiquinone. Couples the redox reaction to proton translocation (for every two electrons transferred, four hydrogen ions are translocated across the cytoplasmic membrane), and thus conserves the redox energy in a proton gradient. The protein is NADH-quinone oxidoreductase subunit N 1 of Herpetosiphon aurantiacus (strain ATCC 23779 / DSM 785 / 114-95).